The following is a 330-amino-acid chain: Aspartate--ammonia ligase (330 aa).

The protein belongs to the class-II aminoacyl-tRNA synthetase family. AsnA subfamily.

Its subcellular location is the cytoplasm. The enzyme catalyses L-aspartate + NH4(+) + ATP = L-asparagine + AMP + diphosphate + H(+). Its pathway is amino-acid biosynthesis; L-asparagine biosynthesis; L-asparagine from L-aspartate (ammonia route): step 1/1. The sequence is that of Aspartate--ammonia ligase from Streptococcus pyogenes serotype M5 (strain Manfredo).